Consider the following 123-residue polypeptide: Large ribosomal subunit protein bL19 (123 aa).

It belongs to the bacterial ribosomal protein bL19 family.

Its function is as follows. This protein is located at the 30S-50S ribosomal subunit interface and may play a role in the structure and function of the aminoacyl-tRNA binding site. The protein is Large ribosomal subunit protein bL19 of Ureaplasma urealyticum serovar 10 (strain ATCC 33699 / Western).